The primary structure comprises 253 residues: 3-deoxy-manno-octulosonate cytidylyltransferase (253 aa).

Belongs to the KdsB family.

The protein localises to the cytoplasm. The enzyme catalyses 3-deoxy-alpha-D-manno-oct-2-ulosonate + CTP = CMP-3-deoxy-beta-D-manno-octulosonate + diphosphate. The protein operates within nucleotide-sugar biosynthesis; CMP-3-deoxy-D-manno-octulosonate biosynthesis; CMP-3-deoxy-D-manno-octulosonate from 3-deoxy-D-manno-octulosonate and CTP: step 1/1. Its pathway is bacterial outer membrane biogenesis; lipopolysaccharide biosynthesis. Activates KDO (a required 8-carbon sugar) for incorporation into bacterial lipopolysaccharide in Gram-negative bacteria. This chain is 3-deoxy-manno-octulosonate cytidylyltransferase, found in Edwardsiella ictaluri (strain 93-146).